A 214-amino-acid chain; its full sequence is ATP-dependent Clp protease proteolytic subunit (214 aa).

The active-site Nucleophile is the serine 113. Residue histidine 138 is part of the active site.

The protein belongs to the peptidase S14 family. In terms of assembly, fourteen ClpP subunits assemble into 2 heptameric rings which stack back to back to give a disk-like structure with a central cavity, resembling the structure of eukaryotic proteasomes.

Its subcellular location is the cytoplasm. The catalysed reaction is Hydrolysis of proteins to small peptides in the presence of ATP and magnesium. alpha-casein is the usual test substrate. In the absence of ATP, only oligopeptides shorter than five residues are hydrolyzed (such as succinyl-Leu-Tyr-|-NHMec, and Leu-Tyr-Leu-|-Tyr-Trp, in which cleavage of the -Tyr-|-Leu- and -Tyr-|-Trp bonds also occurs).. Cleaves peptides in various proteins in a process that requires ATP hydrolysis. Has a chymotrypsin-like activity. Plays a major role in the degradation of misfolded proteins. The protein is ATP-dependent Clp protease proteolytic subunit of Teredinibacter turnerae (strain ATCC 39867 / T7901).